A 412-amino-acid chain; its full sequence is MNYLPQQDPQVFAAIEQERKRQHAKIELIASENFVSRAVMEAQGSVLTNKYAEGYPGRRYYGGCEYVDIVEDLARERAKQLFGAEHVNVQPHSGAQANMAVYFTVLEHGDTVLGMNLSHGGHLTHGSPVNFSGIQYNFVEYGVDPETHVIDYDDVREKARLHRPKLIVAGASAYPRIIDFAKFREIADEVGAYLMVDMAHIAGLVAAGVHPNPVPYAHFVTTTTHKTLRGPRGGMILCQEQFAKQIDKAIFPGIQGGPLMHVIAAKAVALGEALQDDFKVYAKRVVENAKRLAAALQNEGFTLISGGTDNHLLLVDLRPQQLTGKTAEKVLDEVGITVNKNTIPYDPESPFVTSGIRIGTAAVTTRGFGLEEMDEIAAIIGLVLKNVGSEQALEEARQRVAALTEKFPLYQD.

(6S)-5,6,7,8-tetrahydrofolate contacts are provided by residues Leu117 and 121-123; that span reads GHL. Lys226 bears the N6-(pyridoxal phosphate)lysine mark. Position 349 to 351 (349 to 351) interacts with (6S)-5,6,7,8-tetrahydrofolate; that stretch reads SPF.

This sequence belongs to the SHMT family. In terms of assembly, homodimer. Pyridoxal 5'-phosphate is required as a cofactor.

Its subcellular location is the cytoplasm. The enzyme catalyses (6R)-5,10-methylene-5,6,7,8-tetrahydrofolate + glycine + H2O = (6S)-5,6,7,8-tetrahydrofolate + L-serine. It participates in one-carbon metabolism; tetrahydrofolate interconversion. Its pathway is amino-acid biosynthesis; glycine biosynthesis; glycine from L-serine: step 1/1. Catalyzes the reversible interconversion of serine and glycine with tetrahydrofolate (THF) serving as the one-carbon carrier. This reaction serves as the major source of one-carbon groups required for the biosynthesis of purines, thymidylate, methionine, and other important biomolecules. Also exhibits THF-independent aldolase activity toward beta-hydroxyamino acids, producing glycine and aldehydes, via a retro-aldol mechanism. The chain is Serine hydroxymethyltransferase from Geobacillus kaustophilus (strain HTA426).